We begin with the raw amino-acid sequence, 144 residues long: Globin-1 (144 aa).

In terms of domain architecture, Globin spans 1-141 (VSANDIKNVQ…ILHQMSSYFA (141 aa)). His89 lines the heme b pocket.

Belongs to the globin family. As to quaternary structure, homodimer.

The protein is Globin-1 of Phreagena soyoae (Deep-sea cold-seep clam).